The sequence spans 1218 residues: NACHT, LRR and PYD domains-containing protein 1 allele 2 (1218 aa).

The segment at 1 to 61 (MEESQSKQES…SLPGWSSTSK (61 aa)) is disordered. Polar residues predominate over residues 7 to 29 (KQESNTRVAQHGSQQDVDPTFQT). One can recognise an NACHT domain in the interval 175–484 (QLVIIEGAAG…EFFAAMSYIL (310 aa)). 181–188 (GAAGIGKS) is an ATP binding site. 3 LRR repeats span residues 343–364 (KERN…LTLC), 673–693 (NLEE…RSLC), and 730–750 (RLAE…RQLC). The span at 799-815 (TMPTENTDGEESLTSSK) shows a compositional bias: polar residues. Residues 799-842 (TMPTENTDGEESLTSSKQQQQQSGDKHMEPLGTDDDFWGPSGPV) are disordered. Residues 835-968 (FWGPSGPVST…HFAVLENPSF (134 aa)) form a ZU5 region. Residues 835–1118 (FWGPSGPVST…LRPALPRMAS (284 aa)) form the FIIND domain. The interval 969 to 1118 (SPMGVLLRMI…LRPALPRMAS (150 aa)) is UPA. The CARD domain maps to 1122-1211 (DAPALLHFVD…HLIMDLLEKS (90 aa)).

This sequence belongs to the NLRP family. As to quaternary structure, interacts (via LRR repeats) with BCL2 and BCL2L1 (via the loop between motifs BH4 and BH3). Interacts with NOD2; this interaction is enhanced in the presence of muramyl dipeptide (MDP) and increases IL1B release. Interacts with EIF2AK2/PKR; this interaction requires EIF2AK2 activity, is accompanied by EIF2AK2 autophosphorylation and promotes inflammasome assembly in response to danger-associated signals. Interacts with MEFV; this interaction targets Nlrp1a to degradation by autophagy, hence preventing excessive IL1B- and IL18-mediated inflammation. Interacts with DPP9; leading to inhibit activation of the inflammasome. DPP9 acts via formation of a ternary complex, composed of a DPP9 homodimer, one full-length NLRP1 protein, and one cleaved C-terminus of Nlrp1a (NACHT, LRR and PYD domains-containing protein 1a, C-terminus). Interacts with DPP8; leading to inhibit activation of the inflammasome, probably via formation of a ternary complex with DPP8. In terms of assembly, interacts with the C-terminal part of Nlrp1a (NACHT, LRR and PYD domains-containing protein 1a, C-terminus) in absence of pathogens and other damage-associated signals. Interacts with the N-terminal part of Nlrp1a (NACHT, LRR and PYD domains-containing protein 1a, N-terminus) in absence of pathogens and other damage-associated signals. Homomultimer; forms the Nlrp1a inflammasome polymeric complex, a filament composed of homopolymers of this form in response to pathogens and other damage-associated signals. The Nlrp1a inflammasome polymeric complex directly recruits pro-caspase-1 (proCASP1) independently of PYCARD/ASC. Interacts (via CARD domain) with CASP1 (via CARD domain); leading to CASP1 activation. Post-translationally, autocatalytically cleaved. Autocatalytic cleavage in FIIND region occurs constitutively, prior to activation signals, and is required for inflammasome activity (IL1B release), possibly by facilitating CASP1 binding. Both N- and C-terminal parts remain associated non-covalently. In terms of processing, (Microbial infection) Cleavage by B.anthracis lethal toxin (LT) endopeptidase promotes ubiquitination and degradation of the N-terminal part, releasing the cleaved C-terminal part of the protein (NACHT, LRR and PYD domains-containing protein 1a, C-terminus), which polymerizes and forms the Nlrp1a inflammasome. Ubiquitinated in response to pathogen-associated signals, leading to its degradation by the proteasome and subsequent release of the cleaved C-terminal part of the protein (NACHT, LRR and PYD domains-containing protein 1a, C-terminus), which polymerizes and forms the Nlrp1a inflammasome.

It is found in the cytoplasm. The protein resides in the cytosol. It localises to the nucleus. Its subcellular location is the inflammasome. Activated by cleavage by B.anthracis lethal toxin (LT) endopeptidase. Cleavage by LT promotes ubiquitination and degradation of the N-terminal part, releasing the cleaved C-terminal part of the protein (NACHT, LRR and PYD domains-containing protein 1a, C-terminus), which polymerizes and forms the Nlrp1a inflammasome. Nlrp1a inflammasome is inhibited by DPP8 and DPP9, which sequester the C-terminal fragment of Nlrp1a (NACHT, LRR and PYD domains-containing protein 1a, C-terminus) in a ternary complex, thereby preventing Nlrp1a oligomerization and activation. Nlrp1a inflammasome is weakly activated by Val-boroPro (Talabostat, PT-100), an inhibitor of dipeptidyl peptidases DPP8 and DPP9. Val-boroPro relieves inhibition of DPP8 and/or DPP9 by promoting disruption of the ternary complex, releasing its C-terminal part from autoinhibition. Weakly activated by Toxoplasma gondii. Acts as the sensor component of the Nlrp1a inflammasome, which mediates inflammasome activation in response to various pathogen-associated signals, leading to subsequent pyroptosis. Inflammasomes are supramolecular complexes that assemble in the cytosol in response to pathogens and other damage-associated signals and play critical roles in innate immunity and inflammation. Acts as a recognition receptor (PRR): recognizes specific pathogens and other damage-associated signals, such as B.anthracis lethal toxin (LT) or Val-boroPro inhibitor, and mediates the formation of the inflammasome polymeric complex. In response to pathogen-associated signals, the N-terminal part of Nlrp1a is degraded by the proteasome, releasing the cleaved C-terminal part of the protein (NACHT, LRR and PYD domains-containing protein 1a, C-terminus), which polymerizes to initiate the formation of the inflammasome complex: the inflammasome directly recruits pro-caspase-1 (proCASP1) independently of PYCARD/ASC and promotes caspase-1 (CASP1) activation, which subsequently cleaves and activates inflammatory cytokines IL1B and IL18 and gasdermin-D (GSDMD), leading to pyroptosis. In the absence of GSDMD expression, the Nlrp1a inflammasome is able to recruit and activate CASP8, leading to activation of gasdermin-E (GSDME). Functionally, constitutes the precursor of the Nlrp1a inflammasome, which mediates autoproteolytic processing within the FIIND domain to generate the N-terminal and C-terminal parts, which are associated non-covalently in absence of pathogens and other damage-associated signals. Its function is as follows. Regulatory part that prevents formation of the Nlrp1a inflammasome: in absence of pathogens and other damage-associated signals, interacts with the C-terminal part of Nlrp1a (NACHT, LRR and PYD domains-containing protein 1a, C-terminus), preventing activation of the Nlrp1a inflammasome. In response to pathogen-associated signals, this part is ubiquitinated by the N-end rule pathway and degraded by the proteasome, releasing the cleaved C-terminal part of the protein, which polymerizes and forms the Nlrp1a inflammasome. In terms of biological role, constitutes the active part of the Nlrp1a inflammasome. In absence of pathogens and other damage-associated signals, interacts with the N-terminal part of Nlrp1a (NACHT, LRR and PYD domains-containing protein 1a, N-terminus), preventing activation of the Nlrp1a inflammasome. In response to pathogen-associated signals, the N-terminal part of Nlrp1a is degraded by the proteasome, releasing this form, which polymerizes to form the Nlrp1a inflammasome complex: the Nlrp1a inflammasome complex then directly recruits pro-caspase-1 (proCASP1) and promotes caspase-1 (CASP1) activation, leading to gasdermin-D (GSDMD) cleavage and subsequent pyroptosis. This chain is NACHT, LRR and PYD domains-containing protein 1 allele 2, found in Rattus norvegicus (Rat).